Reading from the N-terminus, the 207-residue chain is Thiamine-phosphate synthase (207 aa).

4-amino-2-methyl-5-(diphosphooxymethyl)pyrimidine is bound by residues 35 to 39 and N67; that span reads QYRDK. Positions 68 and 86 each coordinate Mg(2+). Residue T105 participates in 4-amino-2-methyl-5-(diphosphooxymethyl)pyrimidine binding. 132–134 serves as a coordination point for 2-[(2R,5Z)-2-carboxy-4-methylthiazol-5(2H)-ylidene]ethyl phosphate; the sequence is SNT. 4-amino-2-methyl-5-(diphosphooxymethyl)pyrimidine is bound at residue K135. 2-[(2R,5Z)-2-carboxy-4-methylthiazol-5(2H)-ylidene]ethyl phosphate is bound at residue G162.

The protein belongs to the thiamine-phosphate synthase family. The cofactor is Mg(2+).

It catalyses the reaction 2-[(2R,5Z)-2-carboxy-4-methylthiazol-5(2H)-ylidene]ethyl phosphate + 4-amino-2-methyl-5-(diphosphooxymethyl)pyrimidine + 2 H(+) = thiamine phosphate + CO2 + diphosphate. It carries out the reaction 2-(2-carboxy-4-methylthiazol-5-yl)ethyl phosphate + 4-amino-2-methyl-5-(diphosphooxymethyl)pyrimidine + 2 H(+) = thiamine phosphate + CO2 + diphosphate. The catalysed reaction is 4-methyl-5-(2-phosphooxyethyl)-thiazole + 4-amino-2-methyl-5-(diphosphooxymethyl)pyrimidine + H(+) = thiamine phosphate + diphosphate. The protein operates within cofactor biosynthesis; thiamine diphosphate biosynthesis; thiamine phosphate from 4-amino-2-methyl-5-diphosphomethylpyrimidine and 4-methyl-5-(2-phosphoethyl)-thiazole: step 1/1. In terms of biological role, condenses 4-methyl-5-(beta-hydroxyethyl)thiazole monophosphate (THZ-P) and 2-methyl-4-amino-5-hydroxymethyl pyrimidine pyrophosphate (HMP-PP) to form thiamine monophosphate (TMP). The polypeptide is Thiamine-phosphate synthase (Pseudomonas fluorescens (strain Pf0-1)).